We begin with the raw amino-acid sequence, 2203 residues long: Voltage-dependent L-type calcium channel subunit alpha-1D (2203 aa).

Disordered regions lie at residues 1–51 (MMMM…QTVL) and 64–100 (KAAQ…SSNS). The Cytoplasmic portion of the chain corresponds to 1 to 126 (MMMMMMMKKM…RACISIVDWK (126 aa)). Residues 38–51 (GPTSQPNSSKQTVL) show a composition bias toward polar residues. Residues 82–93 (QRKRQQYAKSKK) are compositionally biased toward basic residues. An I repeat occupies 112 to 408 (NNPIRRACIS…NLVLGVLSGE (297 aa)). A helical membrane pass occupies residues 127-145 (PFDIFILLAIFANCVALAI). The Extracellular segment spans residues 146–163 (YIPFPEDDSNSTNHNLEK). Asn-155 is a glycosylation site (N-linked (GlcNAc...) asparagine). The helical transmembrane segment at 164 to 183 (VEYAFLIIFTVETFLKIIAS) threads the bilayer. The Cytoplasmic segment spans residues 184–195 (GLLLHPNASVRN). Residues 196-214 (GWNLLDFVIVIVGLFSVIL) form a helical membrane-spanning segment. Residues 215-235 (EQLTKETEGGNHSSGKSGGFD) are Extracellular-facing. A glycan (N-linked (GlcNAc...) asparagine) is linked at Asn-225. Residues 236–254 (VKALRAFRVLRPLRLVSGV) form a helical membrane-spanning segment. The Cytoplasmic portion of the chain corresponds to 255–273 (PSLQVVLNSIIKAMVPLLH). Residues 274 to 293 (IALLVLFVIIIYAIIGLELF) form a helical membrane-spanning segment. The Extracellular portion of the chain corresponds to 294–381 (IGKMHKTCFF…WVNDAIGWEW (88 aa)). Asn-329 is a glycosylation site (N-linked (GlcNAc...) asparagine). Glu-364 lines the Ca(2+) pocket. A helical transmembrane segment spans residues 382 to 406 (PWVYFVSLIILGSFFVLNLVLGVLS). Residues 407-582 (GEFSKEREKA…RRCRAAVKSV (176 aa)) lie on the Cytoplasmic side of the membrane. Positions 429-446 (QQLEEDLKGYLDWITQAE) are binding to the beta subunit. Positions 449–480 (DPENEEEGGEEGKRNTSMPTSETESVNTENVS) are disordered. Positions 463-479 (NTSMPTSETESVNTENV) are enriched in polar residues. Residues 528–774 (EALCVCRCSL…DWNAVMYDGI (247 aa)) form an II repeat. A helical membrane pass occupies residues 583–602 (TFYWLVIVLVFLNTLTISSE). Residues 603 to 617 (HYNQPDWLTQIQDIA) are Extracellular-facing. A helical transmembrane segment spans residues 618–636 (NKVLLALFTCEMLVKMYSL). The Cytoplasmic segment spans residues 637 to 644 (GLQAYFVS). Residues 645–663 (LFNRFDCFVVCGGITETIL) form a helical membrane-spanning segment. Residues 664 to 673 (VELELMSPLG) lie on the Extracellular side of the membrane. Residues 674 to 692 (VSVFRCVRLLRIFKVTRHW) traverse the membrane as a helical segment. Over 693–711 (TSLSNLVASLLNSMKSIAS) the chain is Cytoplasmic. A helical transmembrane segment spans residues 712–732 (LLLLLFLFIIIFSLLGMQLFG). Over 733 to 786 (GKFNFDETQTKRSTFDNFPQALLTVFQILTGEDWNAVMYDGIMAYGGPSSSGMI) the chain is Extracellular. Glu-764 contacts Ca(2+). A helical membrane pass occupies residues 787–811 (VCIYFIILFICGNYILLKLFLAIAV). At 812-945 (DNLADAESLN…VGCHKLINHH (134 aa)) the chain is on the cytoplasmic side. The interval 822–909 (TAQKEEAEEK…AGPRPRRISE (88 aa)) is disordered. A compositionally biased stretch (basic and acidic residues) spans 824-849 (QKEEAEEKERKKIARKESLENKKNNK). Positions 850 to 861 (PEVNQIANSDNK) are enriched in polar residues. The segment covering 884 to 897 (VGEEEEEEEEDEPE) has biased composition (acidic residues). The stretch at 892–1174 (EEDEPEVPAG…LLYKAIDSNG (283 aa)) is one III repeat. The helical transmembrane segment at 946 to 964 (IFTNLILVFIMLSSAALAA) threads the bilayer. The Extracellular segment spans residues 965–980 (EDPIRSHSFRNTILGY). Residues 981–1000 (FDYAFTAIFTVEILLKMTTF) form a helical membrane-spanning segment. Residues 1001-1012 (GAFLHKGAFCRN) lie on the Cytoplasmic side of the membrane. Residues 1013 to 1031 (YFNLLDMLVVGVSLVSFGI) form a helical membrane-spanning segment. The Extracellular portion of the chain corresponds to 1032-1037 (QSSAIS). A helical transmembrane segment spans residues 1038–1057 (VVKILRVLRVLRPLRAINRA). The Cytoplasmic segment spans residues 1058–1076 (KGLKHVVQCVFVAIRTIGN). Residues 1077-1096 (IMIVTTLLQFMFACIGVQLF) form a helical membrane-spanning segment. Over 1097–1186 (KGKFYRCTDE…VGPVYNYRVE (90 aa)) the chain is Extracellular. Positions 1134–1224 (RIWQNSDFNF…QEQGEKEYKN (91 aa)) are dihydropyridine binding. A Ca(2+)-binding site is contributed by Glu-1160. A helical transmembrane segment spans residues 1187-1207 (ISIFFIIYIIIVAFFMMNIFV). Topologically, residues 1208-1264 (GFVIVTFQEQGEKEYKNCELDKNQRQCVEYALKARPLRRYIPKNPYQYKFWYVVNSS) are cytoplasmic. An IV repeat occupies 1211 to 1486 (IVTFQEQGEK…YTCGSNFAIV (276 aa)). A helical membrane pass occupies residues 1265-1283 (PFEYMMFVLIMLNTLCLAM). Residues 1284-1298 (QHYEQSKMFNDAMDI) are Extracellular-facing. The chain crosses the membrane as a helical span at residues 1299–1318 (LNMVFTGVFTVEMVLKVIAF). Over 1319-1325 (KPKGYFS) the chain is Cytoplasmic. Residues 1326–1347 (DAWNTFDSLIVIGSIIDVALSE) form a helical membrane-spanning segment. Residues 1348–1357 (ADNSEESNRI) lie on the Extracellular side of the membrane. The helical transmembrane segment at 1358–1377 (SITFFRLFRVMRLVKLLSRG) threads the bilayer. Over 1378–1396 (EGIRTLLWTFIKSFQALPY) the chain is Cytoplasmic. Residues 1397 to 1416 (VALLIAMLFFIYAVIGMQMF) traverse the membrane as a helical segment. At 1417-1483 (GKVAMRDNNQ…GEEYTCGSNF (67 aa)) the chain is on the extracellular side. The dihydropyridine binding stretch occupies residues 1464–1530 (LCDPDSDYNP…LGPHHLDEFK (67 aa)). The phenylalkylamine binding stretch occupies residues 1476-1519 (EYTCGSNFAIVYFISFYMLCAFLIINLFVAVIMDNFDYLTRDWS). Residues 1484–1508 (AIVYFISFYMLCAFLIINLFVAVIM) traverse the membrane as a helical segment. At 1509-2203 (DNFDYLTRDW…ADEMICITTL (695 aa)) the chain is on the cytoplasmic side. Disordered stretches follow at residues 1734–1766 (NHVN…PASD), 1795–1816 (TSTN…KRPS), 1920–1963 (FERP…HRRS), and 2176–2195 (GPGY…DLAD). The span at 1795–1806 (TSTNANLNNANM) shows a compositional bias: polar residues. Residues 2180-2195 (SDEEPDPGREEEDLAD) show a composition bias toward acidic residues.

Belongs to the calcium channel alpha-1 subunit (TC 1.A.1.11) family. CACNA1D subfamily. Voltage-dependent calcium channels are multisubunit complexes, consisting of alpha-1, alpha-2, beta and delta subunits in a 1:1:1:1 ratio. The channel activity is directed by the pore-forming and voltage-sensitive alpha-1 subunit. In many cases, this subunit is sufficient to generate voltage-sensitive calcium channel activity. The auxiliary subunits beta and alpha-2/delta linked by a disulfide bridge regulate the channel activity. Interacts with CABP1 and CABP4, resulting in a near elimination of calcium-dependent inactivation of the channel. Interacts with RIMBP2. Expressed in brain, pancreatic islets and B-lymphocytes.

It localises to the membrane. It catalyses the reaction Ca(2+)(in) = Ca(2+)(out). Voltage-sensitive calcium channels (VSCC) mediate the entry of calcium ions into excitable cells and are also involved in a variety of calcium-dependent processes, including muscle contraction, hormone or neurotransmitter release, gene expression, cell motility, cell division and cell death. The isoform alpha-1D gives rise to L-type calcium currents. Long-lasting (L-type) calcium channels belong to the 'high-voltage activated' (HVA) group. They are blocked by dihydropyridines (DHP), phenylalkylamines, and by benzothiazepines. In terms of biological role, voltage-sensitive calcium channels (VSCC) mediate the entry of calcium ions into excitable cells and are also involved in a variety of calcium-dependent processes, including muscle contraction, hormone or neurotransmitter release, gene expression, cell motility, cell division and cell death. The isoform alpha-1D gives rise to L-type calcium currents. The chain is Voltage-dependent L-type calcium channel subunit alpha-1D (Cacna1d) from Rattus norvegicus (Rat).